Here is a 150-residue protein sequence, read N- to C-terminus: Ribosome maturation factor RimP (150 aa).

The protein belongs to the RimP family.

It is found in the cytoplasm. Functionally, required for maturation of 30S ribosomal subunits. This Thermotoga petrophila (strain ATCC BAA-488 / DSM 13995 / JCM 10881 / RKU-1) protein is Ribosome maturation factor RimP.